We begin with the raw amino-acid sequence, 876 residues long: Alanine--tRNA ligase (876 aa).

Zn(2+)-binding residues include His-564, His-568, Cys-666, and His-670.

The protein belongs to the class-II aminoacyl-tRNA synthetase family. As to quaternary structure, homotetramer. The cofactor is Zn(2+).

It localises to the cytoplasm. The catalysed reaction is tRNA(Ala) + L-alanine + ATP = L-alanyl-tRNA(Ala) + AMP + diphosphate. Catalyzes the attachment of alanine to tRNA(Ala) in a two-step reaction: alanine is first activated by ATP to form Ala-AMP and then transferred to the acceptor end of tRNA(Ala). Also edits incorrectly charged Ser-tRNA(Ala) and Gly-tRNA(Ala) via its editing domain. This Salmonella typhi protein is Alanine--tRNA ligase.